Here is a 185-residue protein sequence, read N- to C-terminus: Adenine phosphoribosyltransferase (185 aa).

It belongs to the purine/pyrimidine phosphoribosyltransferase family.

It is found in the cytoplasm. It catalyses the reaction AMP + diphosphate = 5-phospho-alpha-D-ribose 1-diphosphate + adenine. Its pathway is purine metabolism; AMP biosynthesis via salvage pathway; AMP from adenine: step 1/1. In terms of biological role, catalyzes a salvage reaction resulting in the formation of AMP, that is energically less costly than de novo synthesis. This is Adenine phosphoribosyltransferase (aprt-1) from Caenorhabditis elegans.